The primary structure comprises 559 residues: Urocanate hydratase (559 aa).

NAD(+) is bound by residues 54–55 (GG), Q132, 178–180 (GMG), E198, R203, 244–245 (NA), 265–269 (QTSAH), 275–276 (YL), and Y324. Residue C412 is part of the active site. G494 contributes to the NAD(+) binding site.

The protein belongs to the urocanase family. The cofactor is NAD(+).

The protein resides in the cytoplasm. It carries out the reaction 4-imidazolone-5-propanoate = trans-urocanate + H2O. Its pathway is amino-acid degradation; L-histidine degradation into L-glutamate; N-formimidoyl-L-glutamate from L-histidine: step 2/3. Catalyzes the conversion of urocanate to 4-imidazolone-5-propionate. This Azotobacter vinelandii (strain DJ / ATCC BAA-1303) protein is Urocanate hydratase.